Reading from the N-terminus, the 480-residue chain is 2-succinylbenzoate--CoA ligase (480 aa).

The protein belongs to the ATP-dependent AMP-binding enzyme family. MenE subfamily.

It carries out the reaction 2-succinylbenzoate + ATP + CoA = 2-succinylbenzoyl-CoA + AMP + diphosphate. Its pathway is quinol/quinone metabolism; 1,4-dihydroxy-2-naphthoate biosynthesis; 1,4-dihydroxy-2-naphthoate from chorismate: step 5/7. It participates in quinol/quinone metabolism; menaquinone biosynthesis. In terms of biological role, converts 2-succinylbenzoate (OSB) to 2-succinylbenzoyl-CoA (OSB-CoA). The chain is 2-succinylbenzoate--CoA ligase from Oceanobacillus iheyensis (strain DSM 14371 / CIP 107618 / JCM 11309 / KCTC 3954 / HTE831).